A 233-amino-acid chain; its full sequence is Large ribosomal subunit protein uL1 (233 aa).

Belongs to the universal ribosomal protein uL1 family. In terms of assembly, part of the 50S ribosomal subunit.

In terms of biological role, binds directly to 23S rRNA. The L1 stalk is quite mobile in the ribosome, and is involved in E site tRNA release. Functionally, protein L1 is also a translational repressor protein, it controls the translation of the L11 operon by binding to its mRNA. The chain is Large ribosomal subunit protein uL1 from Photobacterium profundum (strain SS9).